Reading from the N-terminus, the 506-residue chain is Probable cytochrome P450 519E1 (506 aa).

The chain crosses the membrane as a helical span at residues 1 to 21; sequence MGIGLIILYLLIGLLAYDFTK. C453 lines the heme pocket.

Belongs to the cytochrome P450 family. The cofactor is heme.

Its subcellular location is the membrane. This Dictyostelium discoideum (Social amoeba) protein is Probable cytochrome P450 519E1 (cyp519E1).